The chain runs to 280 residues: Transcription factor MYB60 (280 aa).

2 HTH myb-type domains span residues 9 to 65 (KIGI…RPGI) and 66 to 116 (KRGN…KKKL). 2 DNA-binding regions (H-T-H motif) span residues 37 to 61 (WRSVPTNTGLLRCSKSCRLRWTNYL) and 89 to 112 (WASIASYLPQRTDNDIKNYWNTHL). Residues Cys-49 and Cys-53 each carry the S-nitrosocysteine modification. Positions 118–127 (KSDSDERSRS) are enriched in basic and acidic residues. 2 disordered regions span residues 118-149 (KSDSDERSRSENIALQTSSTRNTINHRSTYAS) and 204-247 (EEGH…NATP). A compositionally biased stretch (polar residues) spans 128-149 (ENIALQTSSTRNTINHRSTYAS).

In terms of tissue distribution, specifically expressed in guard cells. Present in seedlings, leaves, stems and flowers.

The protein resides in the nucleus. In terms of biological role, transcription factor involved in the regulation of gene (e.g. drought-regulated and flavonoid biosynthetic genes) expression and stomatal movements leading to negative regulation of responses to drought and responses to other physiological stimuli (e.g. light). Promotes guard cell deflation in response to water deficit. Triggers root growth upon osmotic stress (e.g. mannitol containing medium). This is Transcription factor MYB60 from Arabidopsis thaliana (Mouse-ear cress).